A 367-amino-acid chain; its full sequence is UDP-N-acetylglucosamine--N-acetylmuramyl-(pentapeptide) pyrophosphoryl-undecaprenol N-acetylglucosamine transferase (367 aa).

UDP-N-acetyl-alpha-D-glucosamine-binding positions include Thr-22–Gly-24, Asn-134, Arg-170, Ser-198, Ile-253, and Gln-298.

Belongs to the glycosyltransferase 28 family. MurG subfamily.

Its subcellular location is the cell inner membrane. The enzyme catalyses di-trans,octa-cis-undecaprenyl diphospho-N-acetyl-alpha-D-muramoyl-L-alanyl-D-glutamyl-meso-2,6-diaminopimeloyl-D-alanyl-D-alanine + UDP-N-acetyl-alpha-D-glucosamine = di-trans,octa-cis-undecaprenyl diphospho-[N-acetyl-alpha-D-glucosaminyl-(1-&gt;4)]-N-acetyl-alpha-D-muramoyl-L-alanyl-D-glutamyl-meso-2,6-diaminopimeloyl-D-alanyl-D-alanine + UDP + H(+). It participates in cell wall biogenesis; peptidoglycan biosynthesis. Its function is as follows. Cell wall formation. Catalyzes the transfer of a GlcNAc subunit on undecaprenyl-pyrophosphoryl-MurNAc-pentapeptide (lipid intermediate I) to form undecaprenyl-pyrophosphoryl-MurNAc-(pentapeptide)GlcNAc (lipid intermediate II). The chain is UDP-N-acetylglucosamine--N-acetylmuramyl-(pentapeptide) pyrophosphoryl-undecaprenol N-acetylglucosamine transferase from Xylella fastidiosa (strain M23).